Reading from the N-terminus, the 1196-residue chain is Major DNA-binding protein (1196 aa).

A zinc finger spans residues 499–512 (CNLCTFDTRHACVH). 2 short sequence motifs (required for filament formation) span residues 843 to 844 (FW) and 1142 to 1144 (FNF). The disordered stretch occupies residues 1158–1196 (GGPGAPGPAFAGRKRAFHGDDPFGEGPPDKKGDLTLDML). Residues 1170 to 1196 (RKRAFHGDDPFGEGPPDKKGDLTLDML) form a required for nuclear localization region. The span at 1174-1196 (FHGDDPFGEGPPDKKGDLTLDML) shows a compositional bias: basic and acidic residues.

Belongs to the herpesviridae major DNA-binding protein family. As to quaternary structure, homooligomers. Forms double-helical filaments necessary for the formation of replication compartments within the host nucleus. Interacts with the origin-binding protein. Interacts with the helicase primase complex; this interaction stimulates primer synthesis activity of the helicase-primase complex. Interacts with the DNA polymerase. Interacts with the alkaline exonuclease; this interaction increases its nuclease processivity.

It is found in the host nucleus. In terms of biological role, plays several crucial roles in viral infection. Participates in the opening of the viral DNA origin to initiate replication by interacting with the origin-binding protein. May disrupt loops, hairpins and other secondary structures present on ssDNA to reduce and eliminate pausing of viral DNA polymerase at specific sites during elongation. Promotes viral DNA recombination by performing strand-transfer, characterized by the ability to transfer a DNA strand from a linear duplex to a complementary single-stranded DNA circle. Can also catalyze the renaturation of complementary single strands. Additionally, reorganizes the host cell nucleus, leading to the formation of prereplicative sites and replication compartments. This process is driven by the protein which can form double-helical filaments in the absence of DNA. The polypeptide is Major DNA-binding protein (Homo sapiens (Human)).